The following is a 371-amino-acid chain: Probable protein phosphatase 2C 11 (371 aa).

Residues 29-49 (FFFFLFNSQTISSFIIFYLFL) form a helical membrane-spanning segment. A disordered region spans residues 67–95 (PPLSVAPLRGDANSPPPESSSSPATKSSL). Positions 85–94 (SSSSPATKSS) are enriched in low complexity. Positions 123 to 368 (SYGYSSLKGK…DNITCIVVRF (246 aa)) constitute a PPM-type phosphatase domain. Mn(2+) is bound by residues aspartate 159, glycine 160, aspartate 320, and aspartate 359.

This sequence belongs to the PP2C family. The cofactor is Mg(2+). Mn(2+) is required as a cofactor.

Its subcellular location is the membrane. It carries out the reaction O-phospho-L-seryl-[protein] + H2O = L-seryl-[protein] + phosphate. The catalysed reaction is O-phospho-L-threonyl-[protein] + H2O = L-threonyl-[protein] + phosphate. This is Probable protein phosphatase 2C 11 from Arabidopsis thaliana (Mouse-ear cress).